Here is a 1053-residue protein sequence, read N- to C-terminus: Probable dihydropyrimidine dehydrogenase [NADP(+)] (1053 aa).

The region spanning 84 to 115 (ERGALKEAMRCLKCADAPCQKSCPTQLDIKSF) is the 4Fe-4S ferredoxin-type 1 domain. [4Fe-4S] cluster contacts are provided by cysteine 94, cysteine 97, cysteine 102, cysteine 106, cysteine 145, cysteine 151, cysteine 155, and glutamine 171. FAD-binding positions include 207 to 211 (GCGPA), 231 to 239 (EKRAYIGGL), arginine 248, and leucine 274. Residues 354–357 (AGDT), 378–379 (RK), arginine 385, 451–453 (AFG), and 495–501 (DVAGVAE) contribute to the NADP(+) site. 494 to 503 (GDVAGVAETT) serves as a coordination point for FAD. FMN-binding positions include serine 574 and 598–599 (KT). Residues asparagine 633 and 692-694 (NLS) each bind substrate. Cysteine 695 serves as the catalytic Proton acceptor. An FMN-binding site is contributed by lysine 733. Substrate is bound at residue 760-761 (NT). FMN contacts are provided by residues glycine 791, 817-819 (TGG), and 840-841 (CS). 4Fe-4S ferredoxin-type domains lie at 949 to 981 (EVAI…FDAV) and 983 to 1013 (HQPH…MVPR). Positions 958, 961, 964, 968, 992, 995, 998, and 1002 each coordinate [4Fe-4S] cluster.

Belongs to the dihydropyrimidine dehydrogenase family. Requires [4Fe-4S] cluster as cofactor. It depends on FAD as a cofactor. The cofactor is FMN.

It carries out the reaction 5,6-dihydrouracil + NADP(+) = uracil + NADPH + H(+). Its pathway is amino-acid biosynthesis; beta-alanine biosynthesis. Its function is as follows. Involved in pyrimidine base degradation. Catalyzes the reduction of uracil and thymine. Also involved the degradation of the chemotherapeutic drug 5-fluorouracil. The protein is Probable dihydropyrimidine dehydrogenase [NADP(+)] of Caenorhabditis briggsae.